Here is a 292-residue protein sequence, read N- to C-terminus: GTP cyclohydrolase FolE2 (292 aa).

The protein belongs to the GTP cyclohydrolase IV family.

It catalyses the reaction GTP + H2O = 7,8-dihydroneopterin 3'-triphosphate + formate + H(+). It functions in the pathway cofactor biosynthesis; 7,8-dihydroneopterin triphosphate biosynthesis; 7,8-dihydroneopterin triphosphate from GTP: step 1/1. Its function is as follows. Converts GTP to 7,8-dihydroneopterin triphosphate. This chain is GTP cyclohydrolase FolE2, found in Staphylococcus aureus (strain Newman).